A 325-amino-acid polypeptide reads, in one-letter code: Treponemal membrane protein B (325 aa).

A signal peptide spans 1-24 (MKTRNFSLVSALYVLLGVPLFVSA). The EAARKAAE repeat unit spans residues 159–166 (EAARKAAE). One copy of the ARKLEEQRIAAQKAQEERKRAEE repeat lies at 167-189 (ARKLEEQRIAAQKAQEERKRAEE). The tract at residues 176 to 224 (AAQKAQEERKRAEEEAARKAAEARKLEEQRIAAQKAQEERKRAEEEAAR) is disordered. One copy of the EAARKAAE repeat lies at 190–197 (EAARKAAE). Residues 198–220 (ARKLEEQRIAAQKAQEERKRAEE) form an ARKLEEQRIAAQKAQEERKRAEE repeat. The stretch at 221 to 228 (EAARKAAE) is one EAARKAAE repeat. One copy of the EAARKAEE repeat lies at 229 to 236 (EAARKAEE).

It to T.phagedenis TmpB.

Its subcellular location is the cell outer membrane. Tmp may serve as a porin or transport protein for large molecules. The chain is Treponemal membrane protein B (tmpB) from Treponema pallidum (strain Nichols).